The primary structure comprises 247 residues: Programmed cell death 1 ligand 2 (247 aa).

The N-terminal stretch at 1 to 19 (MLLLLPILNLSLQLHPVAA) is a signal peptide. Topologically, residues 20-221 (LFTVTAPKEV…RMEPKVPRTW (202 aa)) are extracellular. The 98-residue stretch at 21–118 (FTVTAPKEVY…AWDYKYLTVK (98 aa)) folds into the Ig-like V-type domain. Disulfide bonds link Cys42–Cys102 and Cys143–Cys192. 4 N-linked (GlcNAc...) asparagine glycosylation sites follow: Asn64, Asn157, Asn163, and Asn189. An Ig-like C2-type domain is found at 122 to 203 (SYMRIDTRIL…FWNAHMKELT (82 aa)). Residues 222–242 (PLHVFIPACTIALIFLAIVII) form a helical membrane-spanning segment. The Cytoplasmic segment spans residues 243-247 (QRKRI).

This sequence belongs to the immunoglobulin superfamily. BTN/MOG family. In terms of assembly, interacts with PDCD1. In terms of tissue distribution, expressed in immature and mature bone marrow-derived dendritic cells and splenic dendritic cells. Highly expressed in placenta, liver and weakly expressed in heart, spleen, lymph nodes and thymus. Also expressed in some tumor cell lines of lymphoid origin.

The protein localises to the cell membrane. Its function is as follows. Involved in the costimulatory signal essential for T-cell proliferation and IFNG production in a PDCD1-independent manner. Interaction with PDCD1 inhibits T-cell proliferation by blocking cell cycle progression and cytokine production. In Mus musculus (Mouse), this protein is Programmed cell death 1 ligand 2 (Pdcd1lg2).